Consider the following 73-residue polypeptide: UPF0435 protein OB1527 (73 aa).

It belongs to the UPF0435 family.

This is UPF0435 protein OB1527 from Oceanobacillus iheyensis (strain DSM 14371 / CIP 107618 / JCM 11309 / KCTC 3954 / HTE831).